Reading from the N-terminus, the 204-residue chain is uncharacterized protein (204 aa).

This is an uncharacterized protein from Acinetobacter calcoaceticus.